The primary structure comprises 424 residues: Hemagglutinin-esterase (424 aa).

The N-terminal stretch at 1-16 (MFLLPRFVLVSCIIGS) is a signal peptide. Residues 7 to 127 (FVLVSCIIGS…SNDIWMQNKG (121 aa)) form an esterase domain 1 region. The Virion surface portion of the chain corresponds to 17 to 392 (LGFDNPPTNV…PICVYDPLPI (376 aa)). Ser-40 serves as the catalytic Nucleophile. A disulfide bridge links Cys-44 with Cys-65. Residues Asn-54, Asn-89, Asn-153, Asn-236, and Asn-301 are each glycosylated (N-linked (GlcNAc...) asparagine; by host). 3 cysteine pairs are disulfide-bonded: Cys-113-Cys-162, Cys-197-Cys-276, and Cys-205-Cys-249. Positions 128–266 (LFYTQVYKNM…GNYLAISNEL (139 aa)) are receptor binding. The esterase domain 2 stretch occupies residues 267 to 379 (LLTVPTKAIC…RCPTAADINT (113 aa)). A disulfide bridge connects residues Cys-307 and Cys-312. Asn-316 carries an N-linked (GlcNAc...) asparagine; by host glycan. Catalysis depends on charge relay system residues Asp-326 and His-329. A disulfide bridge connects residues Cys-347 and Cys-371. An N-linked (GlcNAc...) asparagine; by host glycan is attached at Asn-358. The helical transmembrane segment at 393–413 (IFLGILLGVAVIIIVVLLLYF) threads the bilayer. Residues 414–424 (MVDNGTRLHDA) lie on the Intravirion side of the membrane. Asn-417 carries an N-linked (GlcNAc...) asparagine; by host glycan.

It belongs to the influenza type C/coronaviruses hemagglutinin-esterase family. As to quaternary structure, homodimer; disulfide-linked. Forms a complex with the M protein in the pre-Golgi. Associates then with S-M complex to form a ternary complex S-M-HE. Post-translationally, N-glycosylated in the host RER.

The protein resides in the virion membrane. The protein localises to the host cell membrane. The enzyme catalyses N-acetyl-9-O-acetylneuraminate + H2O = N-acetylneuraminate + acetate + H(+). It catalyses the reaction N-acetyl-4-O-acetylneuraminate + H2O = N-acetylneuraminate + acetate + H(+). Its function is as follows. Structural protein that makes short spikes at the surface of the virus. Contains receptor binding and receptor-destroying activities. Mediates de-O-acetylation of N-acetyl-4-O-acetylneuraminic acid, which is probably the receptor determinant recognized by the virus on the surface of erythrocytes and susceptible cells. This receptor-destroying activity is important for virus release as it probably helps preventing self-aggregation and ensures the efficient spread of the progeny virus from cell to cell. May serve as a secondary viral attachment protein for initiating infection, the spike protein being the major one. May become a target for both the humoral and the cellular branches of the immune system. The chain is Hemagglutinin-esterase from Bovine coronavirus (strain Ontario) (BCoV).